A 371-amino-acid chain; its full sequence is uncharacterized protein (371 aa).

This sequence belongs to the serpin family.

This is an uncharacterized protein from Pyrobaculum aerophilum (strain ATCC 51768 / DSM 7523 / JCM 9630 / CIP 104966 / NBRC 100827 / IM2).